The following is a 232-amino-acid chain: Orotidine 5'-phosphate decarboxylase (232 aa).

Residues Asp-13, Lys-35, 62–71 (DLKFHDIPNT), Thr-122, Arg-182, Gln-191, Gly-211, and Arg-212 each bind substrate. Lys-64 serves as the catalytic Proton donor.

The protein belongs to the OMP decarboxylase family. Type 1 subfamily. In terms of assembly, homodimer.

It carries out the reaction orotidine 5'-phosphate + H(+) = UMP + CO2. Its pathway is pyrimidine metabolism; UMP biosynthesis via de novo pathway; UMP from orotate: step 2/2. Functionally, catalyzes the decarboxylation of orotidine 5'-monophosphate (OMP) to uridine 5'-monophosphate (UMP). This Pseudomonas aeruginosa (strain LESB58) protein is Orotidine 5'-phosphate decarboxylase.